The primary structure comprises 203 residues: Ribosomal RNA small subunit methyltransferase G (203 aa).

S-adenosyl-L-methionine contacts are provided by residues glycine 73, leucine 78, 124-125, and arginine 138; that span reads VE.

The protein belongs to the methyltransferase superfamily. RNA methyltransferase RsmG family.

The protein localises to the cytoplasm. The enzyme catalyses guanosine(527) in 16S rRNA + S-adenosyl-L-methionine = N(7)-methylguanosine(527) in 16S rRNA + S-adenosyl-L-homocysteine. In terms of biological role, specifically methylates the N7 position of guanine in position 527 of 16S rRNA. The protein is Ribosomal RNA small subunit methyltransferase G of Haemophilus ducreyi (strain 35000HP / ATCC 700724).